The primary structure comprises 342 residues: METVRSAPPGDGAAEALLKELERQVQDVVRASSWWERHGVDCAILALSLLALPAGFLCLRAHNILAFATGITILGVCHYTLTVKGSHLATHSALTESKRWSKILMIFFLEVCTAFSAEFAKFNHVNLHHVYTNVVGLGDSSTWKVPLLNRYVYMFLGPLLVPIITPLVALEHLRKEEPRTALRTLGFICLGLYSQYWLFMNVSGFKNPSSALACMLLTRSLLAHPYLHVNIFQHIGLPMFSPDKKPRRIHMMTLGVLNLPRQLVLDWAFGHSLISCHVEHHLFPWLSDHMCLKVKPLVSKFLHEKQLPYNEDSYLARFQLFLSRYEEFMVHVPPITELVGVQ.

The next 2 helical transmembrane spans lie at 39–59 (GVDCAILALSLLALPAGFLCL) and 63–83 (NILAFATGITILGVCHYTLTV). A Histidine box-1 motif is present at residues 87 to 91 (HLATH). Residues 100–120 (WSKILMIFFLEVCTAFSAEFA) form a helical membrane-spanning segment. The short motif at 124 to 128 (HVNLH) is the Histidine box-2 element. A run of 2 helical transmembrane segments spans residues 151-171 (YVYMFLGPLLVPIITPLVALE) and 185-205 (LGFICLGLYSQYWLFMNVSGF). The Histidine box-3 signature appears at 277–281 (HVEHH).

Belongs to the fatty acid desaturase type 1 family.

Its subcellular location is the membrane. It participates in lipid metabolism; fatty acid metabolism. The protein is Fatty acid desaturase 6 (Fads6) of Mus musculus (Mouse).